The sequence spans 298 residues: Proline-rich protein 32 (298 aa).

Residues 36 to 56 (CLSSKPEDDAEPWGQPQVPLR) are disordered.

This is Proline-rich protein 32 (PRR32) from Homo sapiens (Human).